The sequence spans 228 residues: uncharacterized protein (228 aa).

The next 5 membrane-spanning stretches (helical) occupy residues 14–34, 42–62, 130–150, 156–176, and 192–212; these read HTIS…MLLV, VALF…AITL, FIFS…LVGS, FSFD…VLFM, and IVIA…LIAL.

This sequence belongs to the AzlC family.

It localises to the cell membrane. This is an uncharacterized protein from Helicobacter pylori (strain ATCC 700392 / 26695) (Campylobacter pylori).